Consider the following 65-residue polypeptide: Large ribosomal subunit protein bL33 (65 aa).

The tract at residues T19 to R40 is disordered.

Belongs to the bacterial ribosomal protein bL33 family.

This Prochlorococcus marinus (strain NATL2A) protein is Large ribosomal subunit protein bL33.